The chain runs to 423 residues: UDP-N-acetylglucosamine 1-carboxyvinyltransferase 1 (423 aa).

Position 23-24 (23-24 (KN)) interacts with phosphoenolpyruvate. R96 is a binding site for UDP-N-acetyl-alpha-D-glucosamine. C120 acts as the Proton donor in catalysis. C120 is subject to 2-(S-cysteinyl)pyruvic acid O-phosphothioketal. UDP-N-acetyl-alpha-D-glucosamine-binding positions include 125–129 (RPIDL), D309, and V331.

This sequence belongs to the EPSP synthase family. MurA subfamily.

The protein resides in the cytoplasm. The enzyme catalyses phosphoenolpyruvate + UDP-N-acetyl-alpha-D-glucosamine = UDP-N-acetyl-3-O-(1-carboxyvinyl)-alpha-D-glucosamine + phosphate. The protein operates within cell wall biogenesis; peptidoglycan biosynthesis. In terms of biological role, cell wall formation. Adds enolpyruvyl to UDP-N-acetylglucosamine. The polypeptide is UDP-N-acetylglucosamine 1-carboxyvinyltransferase 1 (Streptococcus mutans serotype c (strain ATCC 700610 / UA159)).